The sequence spans 338 residues: RNA 3'-terminal phosphate cyclase (338 aa).

Residues glutamine 103 and 283–287 contribute to the ATP site; that span reads YLADQ. Histidine 308 functions as the Tele-AMP-histidine intermediate in the catalytic mechanism.

Belongs to the RNA 3'-terminal cyclase family. Type 1 subfamily.

It is found in the cytoplasm. It catalyses the reaction a 3'-end 3'-phospho-ribonucleotide-RNA + ATP = a 3'-end 2',3'-cyclophospho-ribonucleotide-RNA + AMP + diphosphate. Catalyzes the conversion of 3'-phosphate to a 2',3'-cyclic phosphodiester at the end of RNA. The mechanism of action of the enzyme occurs in 3 steps: (A) adenylation of the enzyme by ATP; (B) transfer of adenylate to an RNA-N3'P to produce RNA-N3'PP5'A; (C) and attack of the adjacent 2'-hydroxyl on the 3'-phosphorus in the diester linkage to produce the cyclic end product. The biological role of this enzyme is unknown but it is likely to function in some aspects of cellular RNA processing. The protein is RNA 3'-terminal phosphate cyclase of Escherichia coli O139:H28 (strain E24377A / ETEC).